Consider the following 435-residue polypeptide: Rho GTPase-activating protein 4 (435 aa).

A disordered region spans residues 1–59 (MAKVLKSSQSCHFPSPSSSSSTSCGGGNDGSNRDPHSPFNISRREEEEEEEERSEKERE). Low complexity predominate over residues 7–23 (SSQSCHFPSPSSSSSTS). A CRIB domain is found at 93–106 (IGVPTDVRHVAHVT). A Rho-GAP domain is found at 138-319 (VSTESMQLSY…LIVKTLKDRK (182 aa)). Residues 321 to 343 (SRDKLVPASNPSPRDHNGDQSSS) form a disordered region.

Acts as a GTPase activator for the Rac-type GTPase by converting it to an inactive GDP-bound state. Acts as a negative feedback regulator in tolerance to oxygen deprivation which requires ARAC4/ROP2. In Arabidopsis thaliana (Mouse-ear cress), this protein is Rho GTPase-activating protein 4 (ROPGAP4).